Reading from the N-terminus, the 164-residue chain is Succinate dehydrogenase assembly factor 2, mitochondrial (164 aa).

It belongs to the SDHAF2 family. As to quaternary structure, interacts with the flavoprotein subunit within the SDH catalytic dimer.

Its subcellular location is the mitochondrion matrix. Functionally, plays an essential role in the assembly of succinate dehydrogenase (SDH), an enzyme complex (also referred to as respiratory complex II) that is a component of both the tricarboxylic acid (TCA) cycle and the mitochondrial electron transport chain, and which couples the oxidation of succinate to fumarate with the reduction of ubiquinone (coenzyme Q) to ubiquinol. Required for flavinylation (covalent attachment of FAD) of the flavoprotein subunit of the SDH catalytic dimer. This Lodderomyces elongisporus (strain ATCC 11503 / CBS 2605 / JCM 1781 / NBRC 1676 / NRRL YB-4239) (Yeast) protein is Succinate dehydrogenase assembly factor 2, mitochondrial.